The sequence spans 91 residues: Small ribosomal subunit protein uS17 (91 aa).

The protein belongs to the universal ribosomal protein uS17 family. As to quaternary structure, part of the 30S ribosomal subunit.

Functionally, one of the primary rRNA binding proteins, it binds specifically to the 5'-end of 16S ribosomal RNA. The polypeptide is Small ribosomal subunit protein uS17 (Thermobifida fusca (strain YX)).